The primary structure comprises 188 residues: Mitochondrial import inner membrane translocase subunit TIM23-2 (188 aa).

The next 4 helical transmembrane spans lie at 64–84 (TGTA…ITGV), 112–131 (GNRI…GIVA), 138–154 (VWTS…VCRA), and 161–178 (AAVA…VVAG).

The protein belongs to the Tim17/Tim22/Tim23 family. Homomultimer. Component of the TIM17:23 complex at least composed of TIM23, TIM17 and TIM50. The complex interacts with the TIM44 component of the PAM complex. Also part of the NADH-ubiquinone oxidoreductase complex I. Interacts with OEP163, TIM17-2, TIM21, TIM50 and MPPA2. As to expression, expressed in roots and young cotyledons. Detected in leaves and flowers.

The protein localises to the mitochondrion inner membrane. Functionally, essential component of the TIM17:23 complex, a complex that mediates the translocation of transit peptide-containing proteins across the mitochondrial inner membrane. Links the inner and outer membranes. This chain is Mitochondrial import inner membrane translocase subunit TIM23-2 (TIM23-2), found in Arabidopsis thaliana (Mouse-ear cress).